A 35-amino-acid chain; its full sequence is uncharacterized protein (35 aa).

An N-terminal signal peptide occupies residues 1–25; sequence MTERKLLQLLRRPFISLSLFTALRA.

This is an uncharacterized protein from Saccharomyces cerevisiae (strain ATCC 204508 / S288c) (Baker's yeast).